The following is a 380-amino-acid chain: L-lactate dehydrogenase (380 aa).

One can recognise an FMN hydroxy acid dehydrogenase domain in the interval Met1–Arg380. Tyr24 serves as a coordination point for substrate. 2 residues coordinate FMN: Ser106 and Gln127. Tyr129 provides a ligand contact to substrate. Residue Thr155 coordinates FMN. Arg164 is a binding site for substrate. Lys251 is an FMN binding site. The active-site Proton acceptor is His275. Arg278 serves as a coordination point for substrate. Position 306-330 (Asp306–Arg330) interacts with FMN.

It belongs to the FMN-dependent alpha-hydroxy acid dehydrogenase family. FMN is required as a cofactor.

The protein resides in the cell inner membrane. It carries out the reaction (S)-lactate + A = pyruvate + AH2. In terms of biological role, catalyzes the conversion of L-lactate to pyruvate. Is coupled to the respiratory chain. This is L-lactate dehydrogenase from Azorhizobium caulinodans (strain ATCC 43989 / DSM 5975 / JCM 20966 / LMG 6465 / NBRC 14845 / NCIMB 13405 / ORS 571).